A 264-amino-acid polypeptide reads, in one-letter code: Synaptophysin-like protein 2 (264 aa).

The Cytoplasmic portion of the chain corresponds to 1–33 (MSSTESPGRTSDKSPRQQVDRLLLGLRWQRLEE). Positions 30–238 (RLEEPLGFIK…NCWFVFKETP (209 aa)) constitute an MARVEL domain. The chain crosses the membrane as a helical span at residues 34–54 (PLGFIKVLQWLFAIFAFGSCG). The Vesicular segment spans residues 55–116 (SYSGETGALV…LMGDFSAPAE (62 aa)). A helical membrane pass occupies residues 117–137 (FFVTLGIFSFFYTMAALVIYL). Over 138-150 (RFHKLYTENKRFP) the chain is Cytoplasmic. Residues 151–171 (LVDFCVTVSFTFFWLVAAAAW) form a helical membrane-spanning segment. Residues 172-213 (GKGLTDVKGATRPSSLTAAMSVCHGEEAVCSAGATPSMGLAN) are Vesicular-facing. An N-linked (GlcNAc...) asparagine glycan is attached at Asn-213. The helical transmembrane segment at 214–234 (LSVLFGFINFFLWAGNCWFVF) threads the bilayer. Over 235 to 264 (KETPWHGQGQDQGQGPSQESAAEQGAVEKQ) the chain is Cytoplasmic. Positions 242-264 (QGQDQGQGPSQESAAEQGAVEKQ) are disordered.

Belongs to the synaptophysin/synaptobrevin family. Expressed abundantly in skeletal muscle and at lower levels in the kidney.

The protein localises to the membrane. Involved in communication between the T-tubular and junctional sarcoplasmic reticulum (SR) membranes. The polypeptide is Synaptophysin-like protein 2 (Sypl2) (Mus musculus (Mouse)).